Consider the following 271-residue polypeptide: MSEMRLIVAGAGGRMGRALTRAISETEGVVLTGALESPNSELLGKDAGTLAGLPANGVLLSADLWSLSANADGIVDFTVPQATIANVAIAAQRGIAHIIGTTGLSTSDNAVIQSVTDRAVVVKSGNMSLGVNLLAAIAKRVAQSLDDSFDIEIVEMHHRAKVDAPSGTALLLGEAVAAGRKIDLATHSARGRDGFTGARKPGDIGFASLRGGTVTGDHTVIFAGASERIELTHKAEDRMIFAHGALTAARWAKGKKPGLYSMADVLGLGDI.

Residues 10-15, Glu-36, 100-102, and 124-127 each bind NAD(+); these read GAGGRM, GTT, and SGNM. His-157 (proton donor/acceptor) is an active-site residue. His-158 provides a ligand contact to (S)-2,3,4,5-tetrahydrodipicolinate. Lys-161 (proton donor) is an active-site residue. 167-168 contributes to the (S)-2,3,4,5-tetrahydrodipicolinate binding site; sequence GT.

The protein belongs to the DapB family.

It localises to the cytoplasm. The catalysed reaction is (S)-2,3,4,5-tetrahydrodipicolinate + NAD(+) + H2O = (2S,4S)-4-hydroxy-2,3,4,5-tetrahydrodipicolinate + NADH + H(+). It catalyses the reaction (S)-2,3,4,5-tetrahydrodipicolinate + NADP(+) + H2O = (2S,4S)-4-hydroxy-2,3,4,5-tetrahydrodipicolinate + NADPH + H(+). It functions in the pathway amino-acid biosynthesis; L-lysine biosynthesis via DAP pathway; (S)-tetrahydrodipicolinate from L-aspartate: step 4/4. In terms of biological role, catalyzes the conversion of 4-hydroxy-tetrahydrodipicolinate (HTPA) to tetrahydrodipicolinate. The polypeptide is 4-hydroxy-tetrahydrodipicolinate reductase (Rhodopseudomonas palustris (strain ATCC BAA-98 / CGA009)).